The sequence spans 559 residues: Protein GRAVITROPIC IN THE LIGHT 1 (559 aa).

Positions 107 to 127 are disordered; it reads AVNRREEYDTEEEENEEEGEI. Residues 114 to 127 are compositionally biased toward acidic residues; sequence YDTEEEENEEEGEI.

Functionally, required for red (R) and far red (FR) light-induced and phytochrome-mediated deregulation of negative gravitropism leading to randomization of hypocotyl growth orientation. The sequence is that of Protein GRAVITROPIC IN THE LIGHT 1 from Arabidopsis thaliana (Mouse-ear cress).